A 74-amino-acid chain; its full sequence is Exodeoxyribonuclease 7 small subunit (74 aa).

Belongs to the XseB family. In terms of assembly, heterooligomer composed of large and small subunits.

It is found in the cytoplasm. It carries out the reaction Exonucleolytic cleavage in either 5'- to 3'- or 3'- to 5'-direction to yield nucleoside 5'-phosphates.. Functionally, bidirectionally degrades single-stranded DNA into large acid-insoluble oligonucleotides, which are then degraded further into small acid-soluble oligonucleotides. This chain is Exodeoxyribonuclease 7 small subunit, found in Clostridium beijerinckii (strain ATCC 51743 / NCIMB 8052) (Clostridium acetobutylicum).